A 421-amino-acid polypeptide reads, in one-letter code: Medium-chain specific acyl-CoA dehydrogenase, mitochondrial (421 aa).

Residues 1–25 (MAAMFRRSCRVLRSLSHFGWRSQHT) constitute a mitochondrion transit peptide. N6-acetyllysine is present on Lys-79. 158–167 (YCVTEPGAGS) provides a ligand contact to FAD. Ser-167 is a binding site for octanoyl-CoA. Lys-179 is subject to N6-succinyllysine. 191-193 (WIT) is a binding site for FAD. Lys-212 carries the post-translational modification N6-acetyllysine; alternate. Lys-212 is subject to N6-succinyllysine; alternate. Ser-216 contacts octanoyl-CoA. N6-acetyllysine; alternate is present on residues Lys-217, Lys-259, and Lys-271. N6-succinyllysine; alternate is present on residues Lys-217, Lys-259, and Lys-271. An octanoyl-CoA-binding site is contributed by Asp-278. Position 279 is an N6-acetyllysine (Lys-279). Position 281 (Arg-281) interacts with octanoyl-CoA. Lys-301 carries the post-translational modification N6-acetyllysine. Residues 306–308 (RKT) and 316–317 (HQ) contribute to the FAD site. Arg-349 and Thr-351 together coordinate octanoyl-CoA. Thr-351 bears the Phosphothreonine mark. FAD is bound at residue 374–378 (QVFGG). Glu-401 lines the octanoyl-CoA pocket. The active-site Proton acceptor is Glu-401. An FAD-binding site is contributed by 402-405 (GTAQ).

This sequence belongs to the acyl-CoA dehydrogenase family. As to quaternary structure, homotetramer. Interacts with the heterodimeric electron transfer flavoprotein ETF. FAD is required as a cofactor. Acetylated. Could occur at proximity of the cofactor-binding sites and reduce the catalytic activity. Could be deacetylated by SIRT3.

The protein resides in the mitochondrion matrix. It carries out the reaction a medium-chain 2,3-saturated fatty acyl-CoA + oxidized [electron-transfer flavoprotein] + H(+) = a medium-chain (2E)-enoyl-CoA + reduced [electron-transfer flavoprotein]. The enzyme catalyses pentanoyl-CoA + oxidized [electron-transfer flavoprotein] + H(+) = (2E)-pentenoyl-CoA + reduced [electron-transfer flavoprotein]. The catalysed reaction is hexanoyl-CoA + oxidized [electron-transfer flavoprotein] + H(+) = (2E)-hexenoyl-CoA + reduced [electron-transfer flavoprotein]. It catalyses the reaction octanoyl-CoA + oxidized [electron-transfer flavoprotein] + H(+) = (2E)-octenoyl-CoA + reduced [electron-transfer flavoprotein]. It carries out the reaction decanoyl-CoA + oxidized [electron-transfer flavoprotein] + H(+) = (2E)-decenoyl-CoA + reduced [electron-transfer flavoprotein]. The enzyme catalyses dodecanoyl-CoA + oxidized [electron-transfer flavoprotein] + H(+) = (2E)-dodecenoyl-CoA + reduced [electron-transfer flavoprotein]. The catalysed reaction is tetradecanoyl-CoA + oxidized [electron-transfer flavoprotein] + H(+) = (2E)-tetradecenoyl-CoA + reduced [electron-transfer flavoprotein]. It catalyses the reaction oxidized [electron-transfer flavoprotein] + hexadecanoyl-CoA + H(+) = (2E)-hexadecenoyl-CoA + reduced [electron-transfer flavoprotein]. It functions in the pathway lipid metabolism; mitochondrial fatty acid beta-oxidation. In terms of biological role, medium-chain specific acyl-CoA dehydrogenase is one of the acyl-CoA dehydrogenases that catalyze the first step of mitochondrial fatty acid beta-oxidation, an aerobic process breaking down fatty acids into acetyl-CoA and allowing the production of energy from fats. The first step of fatty acid beta-oxidation consists in the removal of one hydrogen from C-2 and C-3 of the straight-chain fatty acyl-CoA thioester, resulting in the formation of trans-2-enoyl-CoA. Electron transfer flavoprotein (ETF) is the electron acceptor that transfers electrons to the main mitochondrial respiratory chain via ETF-ubiquinone oxidoreductase (ETF dehydrogenase). Among the different mitochondrial acyl-CoA dehydrogenases, medium-chain specific acyl-CoA dehydrogenase acts specifically on acyl-CoAs with saturated 6 to 12 carbons long primary chains. The protein is Medium-chain specific acyl-CoA dehydrogenase, mitochondrial of Sus scrofa (Pig).